We begin with the raw amino-acid sequence, 170 residues long: Small ribosomal subunit protein uS5 (170 aa).

Residues 13–76 form the S5 DRBM domain; sequence LTEKLIGVNR…DQARRSMVKI (64 aa).

It belongs to the universal ribosomal protein uS5 family. In terms of assembly, part of the 30S ribosomal subunit. Contacts proteins S4 and S8.

Functionally, with S4 and S12 plays an important role in translational accuracy. In terms of biological role, located at the back of the 30S subunit body where it stabilizes the conformation of the head with respect to the body. This Laribacter hongkongensis (strain HLHK9) protein is Small ribosomal subunit protein uS5.